Consider the following 465-residue polypeptide: Cysteine--tRNA ligase (465 aa).

Cys-30 contacts Zn(2+). The 'HIGH' region signature appears at 32–42 (ITVYDYCHVGH). The Zn(2+) site is built by Cys-214, His-239, and Glu-243. A 'KMSKS' region motif is present at residues 271–275 (KMSKS). Lys-274 contributes to the ATP binding site.

Belongs to the class-I aminoacyl-tRNA synthetase family. Monomer. The cofactor is Zn(2+).

The protein localises to the cytoplasm. It carries out the reaction tRNA(Cys) + L-cysteine + ATP = L-cysteinyl-tRNA(Cys) + AMP + diphosphate. This is Cysteine--tRNA ligase from Burkholderia vietnamiensis (strain G4 / LMG 22486) (Burkholderia cepacia (strain R1808)).